The primary structure comprises 530 residues: Testis-expressed protein 44 (530 aa).

Residues 1–10 show a composition bias toward acidic residues; it reads MTAEPLEDPE. 4 disordered regions span residues 1 to 85, 207 to 233, 256 to 290, and 305 to 384; these read MTAE…FIRT, ATSA…TSLL, ENNR…QPVL, and QTSV…SPDF. Polar residues-rich tracts occupy residues 11–26, 222–233, and 257–280; these read ASSS…SSDN, GQDNPEETTSLL, and NNRT…TLGN. Residues 365-381 are compositionally biased toward pro residues; that stretch reads PPDPPDPGSPGGSPPHS. A Phosphoserine modification is found at serine 468.

It localises to the cytoplasm. The sequence is that of Testis-expressed protein 44 (Tex44) from Mus musculus (Mouse).